Here is a 387-residue protein sequence, read N- to C-terminus: MEQVVIVDAIRTPMGRSKGGAFRNVRAEDLSAHLMRSLLARNPALEAAALDDIYWGCVQQTLEQGFNIARNAALLAEVPHSVPAVTVNRLCGSSMQALHDAARMIMTGDAQACLVGGVEHMGHVPMSHGVDFHPGLSRNVAKAAGMMGLTAEMLARMHGISREMQDAFAARSHARAWAATQSGAFKNEIIPTGGHDADGVLKQFNYDEVIRPETTMEALATLRPAFDPVSGTVTAGSSSALSDGAAAMLVMSESRARELGLKPRARVRSMAVVGCDPSIMGYGPVPASKLALKKAGLSASDIGVFEMNEAFAAQILPCIKDLGLMEQIDEKINLNGGAIALGHPLGCSGARISTTLLNLMERKDVQFGLATMCIGLGQGIATVFERV.

C91 functions as the Acyl-thioester intermediate in the catalytic mechanism. Active-site proton acceptor residues include H343 and C373.

It belongs to the thiolase-like superfamily. Thiolase family. In terms of assembly, heterotetramer of two alpha chains (FadB) and two beta chains (FadA).

It localises to the cytoplasm. The catalysed reaction is an acyl-CoA + acetyl-CoA = a 3-oxoacyl-CoA + CoA. It participates in lipid metabolism; fatty acid beta-oxidation. In terms of biological role, catalyzes the final step of fatty acid oxidation in which acetyl-CoA is released and the CoA ester of a fatty acid two carbons shorter is formed. This is 3-ketoacyl-CoA thiolase from Escherichia fergusonii (strain ATCC 35469 / DSM 13698 / CCUG 18766 / IAM 14443 / JCM 21226 / LMG 7866 / NBRC 102419 / NCTC 12128 / CDC 0568-73).